Reading from the N-terminus, the 290-residue chain is Nucleotide-binding protein Xfasm12_0753 (290 aa).

13–20 (GLSGSGKS) serves as a coordination point for ATP. Position 65–68 (65–68 (DIRS)) interacts with GTP.

This sequence belongs to the RapZ-like family.

In terms of biological role, displays ATPase and GTPase activities. The chain is Nucleotide-binding protein Xfasm12_0753 from Xylella fastidiosa (strain M12).